A 33-amino-acid polypeptide reads, in one-letter code: Cytochrome b6-f complex subunit 5 (33 aa).

The helical transmembrane segment at 5–25 threads the bilayer; sequence LLFGIILGLISCVLAGLFVSA.

The protein belongs to the PetG family. As to quaternary structure, the 4 large subunits of the cytochrome b6-f complex are cytochrome b6, subunit IV (17 kDa polypeptide, PetD), cytochrome f and the Rieske protein, while the 4 small subunits are PetG, PetL, PetM and PetN. The complex functions as a dimer.

The protein resides in the plastid. Its subcellular location is the chloroplast thylakoid membrane. In terms of biological role, component of the cytochrome b6-f complex, which mediates electron transfer between photosystem II (PSII) and photosystem I (PSI), cyclic electron flow around PSI, and state transitions. PetG is required for either the stability or assembly of the cytochrome b6-f complex. The polypeptide is Cytochrome b6-f complex subunit 5 (Bigelowiella natans (Pedinomonas minutissima)).